A 547-amino-acid polypeptide reads, in one-letter code: MAELTISSDEIRSAIANYTSSYSAEASREEVGVVISAADGIAQVSGLPSVMANELLEFPGGVIGVAQNLEADRVGVVVLGNYELLKEGDQVRRTGDVLSIPVGEAFLGRVINPLGQPIDGLGEIASEEDRVLELQAPTVLERQPVEEPLATGIKAIDAMTPIGRGQRQLIIGDRKTGKTAVCVDTILNQKANWETGDKTKQVRCIYVAIGQKGSTIAALRKTLEEQGALEYTTIVAAPASDAAGFKWLAPFAGAALAQHWMYQGNHVLVIYDDLTKQAEAYRAISLLLRRPPGREAYPGDVFYLHSRLLERAAKLSDDLGAGSITALPIIETKANDVSAFIPTNVISITDGQVFLESDLFNRGIRPAINVGVSVSRVGGAAQTKGMKKVAGSLRLDLAAFRDLEAFATFASDLDAASKSQLERGQRLVQLLIQSENAPQAVEYQIISLWLAGEGAFDNVPVEDVRRFESELHEYLGSNAAQVYEQIAGGAQLSDESKETLLKATEDFKSAFQTTDGTPVINEPEVEALDAGQVKKDQLTVSRKVSKK.

172 to 179 contacts ATP; the sequence is GDRKTGKT.

It belongs to the ATPase alpha/beta chains family. F-type ATPases have 2 components, CF(1) - the catalytic core - and CF(0) - the membrane proton channel. CF(1) has five subunits: alpha(3), beta(3), gamma(1), delta(1), epsilon(1). CF(0) has three main subunits: a(1), b(2) and c(9-12). The alpha and beta chains form an alternating ring which encloses part of the gamma chain. CF(1) is attached to CF(0) by a central stalk formed by the gamma and epsilon chains, while a peripheral stalk is formed by the delta and b chains.

The protein localises to the cell membrane. The enzyme catalyses ATP + H2O + 4 H(+)(in) = ADP + phosphate + 5 H(+)(out). In terms of biological role, produces ATP from ADP in the presence of a proton gradient across the membrane. The alpha chain is a regulatory subunit. The protein is ATP synthase subunit alpha of Corynebacterium glutamicum (strain R).